Reading from the N-terminus, the 277-residue chain is Phosphonoacetaldehyde hydrolase (277 aa).

D20 serves as the catalytic Nucleophile. Mg(2+) contacts are provided by D20 and A22. The active-site Schiff-base intermediate with substrate is the K61. D194 serves as a coordination point for Mg(2+).

It belongs to the HAD-like hydrolase superfamily. PhnX family. In terms of assembly, homodimer. It depends on Mg(2+) as a cofactor.

It carries out the reaction phosphonoacetaldehyde + H2O = acetaldehyde + phosphate + H(+). Involved in phosphonate degradation. This chain is Phosphonoacetaldehyde hydrolase, found in Syntrophobacter fumaroxidans (strain DSM 10017 / MPOB).